The following is a 559-amino-acid chain: Dihydroxy-acid dehydratase (559 aa).

Cys49 contacts [2Fe-2S] cluster. Asp81 is a Mg(2+) binding site. Cys122 is a [2Fe-2S] cluster binding site. Residues Asp123 and Lys124 each coordinate Mg(2+). Lys124 carries the post-translational modification N6-carboxylysine. Cys194 is a [2Fe-2S] cluster binding site. Glu446 serves as a coordination point for Mg(2+). The active-site Proton acceptor is Ser472.

This sequence belongs to the IlvD/Edd family. In terms of assembly, homodimer. [2Fe-2S] cluster is required as a cofactor. Requires Mg(2+) as cofactor.

It carries out the reaction (2R)-2,3-dihydroxy-3-methylbutanoate = 3-methyl-2-oxobutanoate + H2O. The enzyme catalyses (2R,3R)-2,3-dihydroxy-3-methylpentanoate = (S)-3-methyl-2-oxopentanoate + H2O. The protein operates within amino-acid biosynthesis; L-isoleucine biosynthesis; L-isoleucine from 2-oxobutanoate: step 3/4. It functions in the pathway amino-acid biosynthesis; L-valine biosynthesis; L-valine from pyruvate: step 3/4. Functionally, functions in the biosynthesis of branched-chain amino acids. Catalyzes the dehydration of (2R,3R)-2,3-dihydroxy-3-methylpentanoate (2,3-dihydroxy-3-methylvalerate) into 2-oxo-3-methylpentanoate (2-oxo-3-methylvalerate) and of (2R)-2,3-dihydroxy-3-methylbutanoate (2,3-dihydroxyisovalerate) into 2-oxo-3-methylbutanoate (2-oxoisovalerate), the penultimate precursor to L-isoleucine and L-valine, respectively. The sequence is that of Dihydroxy-acid dehydratase from Prochlorococcus marinus (strain MIT 9515).